The primary structure comprises 71 residues: Large ribosomal subunit protein uL29 (71 aa).

This sequence belongs to the universal ribosomal protein uL29 family. In terms of assembly, part of the 50S ribosomal subunit. Interacts with protein L23.

Its function is as follows. Stabilizes the tertiary rRNA structure within the 23S rRNA domain (domain I) to which it binds. Located at the polypeptide exit tunnel on the outside of the subunit. The chain is Large ribosomal subunit protein uL29 (rpl29) from Haloarcula marismortui (strain ATCC 43049 / DSM 3752 / JCM 8966 / VKM B-1809) (Halobacterium marismortui).